A 420-amino-acid polypeptide reads, in one-letter code: Diaminobutyrate--2-oxoglutarate transaminase (420 aa).

Lys-271 carries the post-translational modification N6-(pyridoxal phosphate)lysine.

This sequence belongs to the class-III pyridoxal-phosphate-dependent aminotransferase family. The cofactor is pyridoxal 5'-phosphate.

The enzyme catalyses L-2,4-diaminobutanoate + 2-oxoglutarate = L-aspartate 4-semialdehyde + L-glutamate. It participates in amine and polyamine biosynthesis; ectoine biosynthesis; L-ectoine from L-aspartate 4-semialdehyde: step 1/3. Catalyzes reversively the conversion of L-aspartate beta-semialdehyde (ASA) to L-2,4-diaminobutyrate (DABA) by transamination with L-glutamate. This chain is Diaminobutyrate--2-oxoglutarate transaminase (ectB), found in Streptomyces anulatus (Streptomyces chrysomallus).